The sequence spans 138 residues: MSTTGKGGKAKGKTASSKQVSRSARAGLQFPVGRISRFLKHGRYSERVGTGAPVYLAAVLEYLAAEVLELAGNAAKDNKKTRIVPRHILLAIRNDEELNKLMANTTIADGGVLPNINPMLLPSKSKKTESRGQASQDL.

Positions 1–23 (MSTTGKGGKAKGKTASSKQVSRS) are disordered. Ser2 carries the N-acetylserine modification. Residues Lys6, Lys9, Lys11, Lys13, and Lys18 each carry the N6-acetyllysine modification. Ser123 carries the phosphoserine modification. Lys124 participates in a covalent cross-link: Glycyl lysine isopeptide (Lys-Gly) (interchain with G-Cter in ubiquitin). Phosphoserine occurs at positions 125, 130, and 135. The [ST]-Q motif signature appears at 135–136 (SQ).

It belongs to the histone H2A family. The nucleosome is a histone octamer containing two molecules each of H2A, H2B, H3 and H4 assembled in one H3-H4 heterotetramer and two H2A-H2B heterodimers. The octamer wraps approximately 147 bp of DNA. Monoubiquitination of Lys-124 gives a specific tag for epigenetic transcriptional repression. Post-translationally, phosphorylated to form H2AX134ph (gamma-H2AX) in response to DNA double-strand breaks (DSBs) generated by exogenous genotoxic agents in both the mitotic MIC and the amitotic MAC. Gamma-H2AX is also found when programmed DNA rearrangements occur, namely homologous recombination in the MIC during prophase of meiosis, and chromosome fragmentation and DNA elimination in developing MACs. Gamma-H2AX is important to recover from exogenous DNA damage and to repair breaks associated with normal micronuclear meiosis and mitosis and macronuclear amitotic division. In terms of processing, acetylation occurs almost exclusively in the MAC.

Its subcellular location is the nucleus. It is found in the chromosome. In terms of biological role, core component of nucleosome which plays a central role in DNA double strand break (DSB) repair. Nucleosomes wrap and compact DNA into chromatin, limiting DNA accessibility to the cellular machineries which require DNA as a template. Histones thereby play a central role in transcription regulation, DNA repair, DNA replication and chromosomal stability. DNA accessibility is regulated via a complex set of post-translational modifications of histones, also called histone code, and nucleosome remodeling. The protein is Histone H2AX (HTA1) of Tetrahymena thermophila (strain SB210).